The following is a 284-amino-acid chain: Tegument protein VP22 (284 aa).

2 disordered regions span residues 1-126 (MSYY…WSID) and 239-284 (LYAS…SRRR). A compositionally biased stretch (basic and acidic residues) spans 74-83 (SRDDDDRRQP). Positions 94–108 (ERRKSQTTVTTRRKT) are enriched in basic residues. Over residues 115-126 (KSSNSNGPWSID) the composition is skewed to polar residues.

It belongs to the alphaherpesvirinae VP22 tegument protein family. Interacts with gE (via C-terminus); this interaction is necessary for the recruitment of VP22 to the Golgi and its packaging into virions. Interacts with gM (via C-terminus). Interacts with VP16; this interaction allows the formation of a tripartite complex composed of VP16, VP22 and UL41/VHS. Interacts with the capsid-binding protein UL16. Interacts with host CGAS. In terms of processing, highly phosphorylated in the host cell. Packaging is selective for underphosphorylated forms.

The protein localises to the virion tegument. Its subcellular location is the host cytoplasm. It localises to the host nucleus. It is found in the host Golgi apparatus. In terms of biological role, tegument protein that plays different roles during the time course of infection. Participates in both the accumulation of viral mRNAs and viral protein translation at late time of infection. Modulates the RNase activity of the virion host shutoff protein UL41 probably to ensure necessary levels of key cellular mRNAs and proteins. Plays a role in microtubule reorganization that occurs after viral infection by stabilizing microtubule network. Plays a role in the inhibition of host innate immune system by targeting the CGAS enzymatic activity which is the principal cytosolic DNA sensor that detects invading viral DNA. Acts by mediating disruption of liquid-like droplets in which CGAS is activated, thereby preventing CGAS activity. In Amazona oratrix (yellow-headed parrot), this protein is Tegument protein VP22 (UL49).